The following is a 241-amino-acid chain: SURF1-like protein (241 aa).

The next 2 membrane-spanning stretches (helical) occupy residues 5-25 (LTVL…LNRL) and 199-219 (LEYA…YRIY).

Belongs to the SURF1 family.

Its subcellular location is the cell membrane. The sequence is that of SURF1-like protein from Rickettsia bellii (strain RML369-C).